The following is a 507-amino-acid chain: uncharacterized protein (507 aa).

12 helical membrane passes run 46–66, 83–103, 112–132, 141–161, 181–201, 207–227, 263–283, 299–319, 328–348, 354–374, 389–409, and 442–462; these read WIVLLAVALLNNTNTMSWIGY, AWLSMVYMMCTIPVGMFAMWA, AVLIAGWANGIGAVIRVISSL, FPICMTGQGIAAIAYPFIMFL, IGVMSNPLGVLMANLISPAIV, VIWLNIFTCVPSLIAMLIATF, IILLIVMGGGIGMFNCLYTVM, VCAALMIVGGVFGAAASSIFV, TLKIALGAAVIFGLIFLQLTL, VILGVTCLLFGVLGLATYPIG, TSTGLIVLSGQIQSVIYVFIM, and MSIMIFSLLATLLVLTLVVLF. A compositionally biased stretch (basic and acidic residues) spans 477 to 493; it reads ATADKAKELSNQNKDRI. The disordered stretch occupies residues 477 to 507; the sequence is ATADKAKELSNQNKDRITLQAESAVEPLQKK.

Its subcellular location is the membrane. This is an uncharacterized protein from Caenorhabditis elegans.